The chain runs to 235 residues: Ubiquinone/menaquinone biosynthesis C-methyltransferase UbiE (235 aa).

S-adenosyl-L-methionine contacts are provided by threonine 59, aspartate 84, and serine 123.

The protein belongs to the class I-like SAM-binding methyltransferase superfamily. MenG/UbiE family.

It catalyses the reaction a 2-demethylmenaquinol + S-adenosyl-L-methionine = a menaquinol + S-adenosyl-L-homocysteine + H(+). The catalysed reaction is a 2-methoxy-6-(all-trans-polyprenyl)benzene-1,4-diol + S-adenosyl-L-methionine = a 5-methoxy-2-methyl-3-(all-trans-polyprenyl)benzene-1,4-diol + S-adenosyl-L-homocysteine + H(+). The protein operates within quinol/quinone metabolism; menaquinone biosynthesis; menaquinol from 1,4-dihydroxy-2-naphthoate: step 2/2. Its pathway is cofactor biosynthesis; ubiquinone biosynthesis. Methyltransferase required for the conversion of demethylmenaquinol (DMKH2) to menaquinol (MKH2) and the conversion of 2-polyprenyl-6-methoxy-1,4-benzoquinol (DDMQH2) to 2-polyprenyl-3-methyl-6-methoxy-1,4-benzoquinol (DMQH2). This is Ubiquinone/menaquinone biosynthesis C-methyltransferase UbiE from Campylobacter jejuni subsp. jejuni serotype O:23/36 (strain 81-176).